Consider the following 739-residue polypeptide: Nucleoprotein (739 aa).

A coiled-coil region spans residues 334 to 363 (VNVGEQYQQLREAATEAEKQLQQYAESREL). The tract at residues 415 to 646 (PKTSGHYDDD…QDSDNTQPEH (232 aa)) is disordered. Low complexity-rich tracts occupy residues 449–458 (SQDTTIPDVV) and 504–514 (KGGQQKNSQKG). Over residues 520–530 (RQTQSRPTQNI) the composition is skewed to polar residues. Positions 567-579 (EEADPLDDADDET) are enriched in acidic residues. Residues 611 to 638 (YRDHSEKKELPQDERQDQDHTQEARNQD) show a composition bias toward basic and acidic residues.

This sequence belongs to the filoviruses nucleoprotein family. Homooligomer. Homomultimerizes to form the nucleocapsid. Binds to viral genomic RNA. Interacts with VP35 and VP30 to form the nucleocapsid. Interacts with host PPP2R5C; this interaction leads to VP30 dephosphorylation and viral transcription. Interacts with VP24; this interaction facilitates nucleocapsid assembly and genome packaging. Interacts with matrix protein VP40; this interaction allows recruitment of the nucleocapsid into progeny virions. Interacts with host STAU1. Interacts with host NXF1 (via RNA-binding domain); this interaction recruits NXF1 to the inclusion bodies were viral replication takes place, probably to export viral mRNA-NXF1 complexes from these sites. Interacts with host CCDC92; this interaction sequesters NP in the host cytoplasm. Interacts with host TRIM14. Post-translationally, phosphorylated and O-glycosylated by host. Acetylated by host EP300 in vitro.

Its subcellular location is the virion. It is found in the host cytoplasm. Oligomerizes into helical capsid to encapsidate the viral genome, protecting it from nucleases and the cellular innate immune response. VP35 binds to and stabilizes monomeric NP, keeping it soluble. Upon virus replication, NP is recruited to bind cooperatively viral genomic RNA and VP35 is released. The encapsidated genomic RNA is termed the nucleocapsid and serves as template for transcription and replication. The nucleocapsid is helical with a pitch of 10.81 NP per turn and a diameter of about 22nm. Each NP binds to six nucleotides of viral genomic RNA, three being exposed to the solvant and three hidden into the nucleocapsid. Also recruits host PPP2R5C phosphatase to dephosphorylate VP30 and thereby promote viral transcription. Upon virion assembly and budding, NP binds to VP24 and possibly host STAU1. The polypeptide is Nucleoprotein (NP) (Zaire ebolavirus (strain Gabon-94) (ZEBOV)).